The primary structure comprises 1026 residues: Phosphoenolpyruvate carboxylase (1026 aa).

Active-site residues include His199 and Lys672.

This sequence belongs to the PEPCase type 1 family. Mg(2+) is required as a cofactor.

It carries out the reaction oxaloacetate + phosphate = phosphoenolpyruvate + hydrogencarbonate. Forms oxaloacetate, a four-carbon dicarboxylic acid source for the tricarboxylic acid cycle. This Nostoc sp. (strain PCC 7120 / SAG 25.82 / UTEX 2576) protein is Phosphoenolpyruvate carboxylase (ppc).